A 1049-amino-acid chain; its full sequence is Isoleucine--tRNA ligase (1049 aa).

Positions 48 to 59 match the 'HIGH' region motif; the sequence is PYPSSPTPHIGT. Residues 597–601 carry the 'KMSKS' region motif; that stretch reads EMHKS. Lys600 provides a ligand contact to ATP.

This sequence belongs to the class-I aminoacyl-tRNA synthetase family. IleS type 2 subfamily. In terms of assembly, monomer. Requires Zn(2+) as cofactor.

The protein resides in the cytoplasm. It carries out the reaction tRNA(Ile) + L-isoleucine + ATP = L-isoleucyl-tRNA(Ile) + AMP + diphosphate. Functionally, catalyzes the attachment of isoleucine to tRNA(Ile). As IleRS can inadvertently accommodate and process structurally similar amino acids such as valine, to avoid such errors it has two additional distinct tRNA(Ile)-dependent editing activities. One activity is designated as 'pretransfer' editing and involves the hydrolysis of activated Val-AMP. The other activity is designated 'posttransfer' editing and involves deacylation of mischarged Val-tRNA(Ile). In Saccharolobus islandicus (strain M.16.27) (Sulfolobus islandicus), this protein is Isoleucine--tRNA ligase.